The following is a 339-amino-acid chain: Beta-ketoacyl-[acyl-carrier-protein] synthase III (339 aa).

Catalysis depends on residues Cys121 and His257. An ACP-binding region spans residues 258–262 (QANLR). Asn288 is an active-site residue.

Belongs to the thiolase-like superfamily. FabH family. As to quaternary structure, homodimer.

It localises to the cytoplasm. The catalysed reaction is malonyl-[ACP] + propanoyl-CoA + H(+) = 3-oxopentanoyl-[ACP] + CO2 + CoA. It catalyses the reaction 2-methylpropanoyl-CoA + malonyl-[ACP] + H(+) = 4-methyl-3-oxopentanoyl-[ACP] + CO2 + CoA. It carries out the reaction malonyl-[ACP] + acetyl-CoA + H(+) = 3-oxobutanoyl-[ACP] + CO2 + CoA. The enzyme catalyses butanoyl-CoA + malonyl-[ACP] + H(+) = 3-oxohexanoyl-[ACP] + CO2 + CoA. Its pathway is lipid metabolism; fatty acid biosynthesis. Functionally, catalyzes the condensation reaction of fatty acid synthesis by the addition to an acyl acceptor of two carbons from malonyl-ACP. Catalyzes the first condensation reaction which initiates fatty acid synthesis and may therefore play a role in governing the total rate of fatty acid production. Possesses both acetoacetyl-ACP synthase and acetyl transacylase activities. Propionyl-CoA and isobutyryl-CoA were the two most preferred substrates, although acetyl-CoA and butyryl-CoA could also be accepted and elongated. Involved in the biosynthesis of R1128 polyketide. The sequence is that of Beta-ketoacyl-[acyl-carrier-protein] synthase III from Streptomyces lividans.